The chain runs to 3380 residues: Apolipophorins (3380 aa).

The first 21 residues, 1-21, serve as a signal peptide directing secretion; sequence MGTPPHIWFLLILAISSGGLS. The 607-residue stretch at 40 to 646 folds into the Vitellogenin domain; sequence YQKGQTYTYS…SQSSYLPRSV (607 aa). Asn132, Asn649, Asn969, Asn2174, Asn2851, and Asn3177 each carry an N-linked (GlcNAc...) asparagine glycan. Positions 2815–2979 constitute a VWFD domain; that stretch reads ATAILLNSHH…NAWKVDAQCA (165 aa). An intrachain disulfide couples Cys2839 to Cys2978.

In terms of processing, cleaved into 2 chains by furin protease. However, prevention of cleavage does not impair its function. Post-translationally, N-glycosylated. Present in brain, hemolymph, fat body and eyes.

It localises to the secreted. Its function is as follows. Constitutes the major component of lipophorin, which mediates transport for various types of lipids in hemolymph. Acts by forming lipoprotein particles that bind lipoproteins and lipids. May be required for morphogens wingless (wg) and hedgehog (hh) function, possibly by acting as vehicles for the movement of wg and hh. In Locusta migratoria (Migratory locust), this protein is Apolipophorins.